Here is a 401-residue protein sequence, read N- to C-terminus: MWHSPFFTAFTLFLGFFTLTLALPTNSLATTGRFTVEQRLIKTFESNWPPKELWRGLRKHHRPLPPAVSRIATHRGPSANGTVKVTPDEYNTEFVNEITIGNNTLFVDIDTGSSDFWVFSSQLPERSQLNHRIYHPEKTGTKLSKQIWEIGYGDGTGAAGNVFLDKASLAGLEVPSQAVQAATWVSYQFADQTVTDGVIGFGFDHFNGVTPKKQKTWFGNIMERLEKPIFTACLKHKAPGFYDFGFIDRTKHIGNPSYLPVDNSRGWWETTFNGFSTGRNDNSTYRFRAVVDTGTTFSLLPREITEQYYSLITGSTFDRENGGWTFPCNTTLPEFAIHINDYKAIVPGEHINWAQIPGTNTCFGGIQSVDRSPAVLGGSFLKSQFVIFDHDGPKMGFAAQR.

The first 22 residues, 1–22, serve as a signal peptide directing secretion; the sequence is MWHSPFFTAFTLFLGFFTLTLA. N80 and N102 each carry an N-linked (GlcNAc...) asparagine glycan. The Peptidase A1 domain maps to 94-398; that stretch reads FVNEITIGNN…DHDGPKMGFA (305 aa). Residue D110 is part of the active site. An N-linked (GlcNAc...) asparagine glycan is attached at N282. D292 is a catalytic residue. The N-linked (GlcNAc...) asparagine glycan is linked to N329.

The protein belongs to the peptidase A1 family.

It localises to the secreted. Its function is as follows. Probable aspartic-type endopeptidase which contributes to virulence. The polypeptide is Probable aspartic-type endopeptidase TRV_05382 (Trichophyton verrucosum (strain HKI 0517)).